A 97-amino-acid polypeptide reads, in one-letter code: Mapk-regulated corepressor-interacting protein 1 (97 aa).

The segment covering 1 to 26 (MTSSSTPRMHTYKRTSSPRSPTNTGE) has biased composition (polar residues). Disordered stretches follow at residues 1–27 (MTSS…TGEL) and 54–97 (QNHE…SKKS). 2 stretches are compositionally biased toward basic and acidic residues: residues 54 to 68 (QNHE…EYVE) and 84 to 97 (SDLK…SKKS). A PXDLS motif motif is present at residues 80–84 (PVDLS).

Belongs to the MCRIP family.

The protein resides in the nucleus. The protein localises to the cytoplasm. It localises to the stress granule. May play a role in the regulation of the epithelial-mesenchymal transition. The polypeptide is Mapk-regulated corepressor-interacting protein 1 (mcrip1) (Danio rerio (Zebrafish)).